Consider the following 79-residue polypeptide: Small ribosomal subunit protein bS18 (79 aa).

It belongs to the bacterial ribosomal protein bS18 family. As to quaternary structure, part of the 30S ribosomal subunit. Forms a tight heterodimer with protein bS6.

Its function is as follows. Binds as a heterodimer with protein bS6 to the central domain of the 16S rRNA, where it helps stabilize the platform of the 30S subunit. The chain is Small ribosomal subunit protein bS18 from Streptococcus pyogenes serotype M49 (strain NZ131).